A 463-amino-acid polypeptide reads, in one-letter code: Succinate--CoA ligase [ADP-forming] subunit beta, mitochondrial (463 aa).

A mitochondrion-targeting transit peptide spans 1–52 (MAASMFYGRLVAVATLRNHRPRTAQRAAAQVLGSSGLFNNHGLQVQQQQQRN). An ATP-grasp domain is found at 61–288 (MELLQEAGVS…SNSAYRQKKI (228 aa)). Lys-78 is subject to N6-acetyllysine. Tyr-84 carries the phosphotyrosine modification. An N6-acetyllysine; alternate modification is found at Lys-88. Lys-88 is modified (N6-succinyllysine; alternate). ATP contacts are provided by residues Lys-98 and 105–107 (GRG). N6-acetyllysine occurs at positions 129, 139, 143, and 216. 2 residues coordinate Mg(2+): Asn-258 and Asp-272. Ser-279 bears the Phosphoserine mark. Asn-323 contributes to the substrate binding site. The residue at position 341 (Thr-341) is a Phosphothreonine. An N6-acetyllysine modification is found at Lys-368. Position 380–382 (380–382 (GIM)) interacts with substrate.

This sequence belongs to the succinate/malate CoA ligase beta subunit family. ATP-specific subunit beta subfamily. Heterodimer of an alpha and a beta subunit. The beta subunit determines specificity for ATP. Interacts with ALAS2. Mg(2+) serves as cofactor. Widely expressed. Not expressed in liver and lung.

It is found in the mitochondrion. The catalysed reaction is succinate + ATP + CoA = succinyl-CoA + ADP + phosphate. The protein operates within carbohydrate metabolism; tricarboxylic acid cycle; succinate from succinyl-CoA (ligase route): step 1/1. Inhibited by itaconate. In terms of biological role, ATP-specific succinyl-CoA synthetase functions in the citric acid cycle (TCA), coupling the hydrolysis of succinyl-CoA to the synthesis of ATP and thus represents the only step of substrate-level phosphorylation in the TCA. The beta subunit provides nucleotide specificity of the enzyme and binds the substrate succinate, while the binding sites for coenzyme A and phosphate are found in the alpha subunit. The protein is Succinate--CoA ligase [ADP-forming] subunit beta, mitochondrial of Homo sapiens (Human).